Here is a 435-residue protein sequence, read N- to C-terminus: Exodeoxyribonuclease 7 large subunit (435 aa).

Residues 1–10 (MRGTRVTETA) are compositionally biased toward polar residues. 2 disordered regions span residues 1–21 (MRGTRVTETASAPRMAPGPPT) and 413–435 (AGKALPSPAQGATNGSLAAPRGK).

It belongs to the XseA family. In terms of assembly, heterooligomer composed of large and small subunits.

It localises to the cytoplasm. It catalyses the reaction Exonucleolytic cleavage in either 5'- to 3'- or 3'- to 5'-direction to yield nucleoside 5'-phosphates.. Bidirectionally degrades single-stranded DNA into large acid-insoluble oligonucleotides, which are then degraded further into small acid-soluble oligonucleotides. The sequence is that of Exodeoxyribonuclease 7 large subunit from Leifsonia xyli subsp. xyli (strain CTCB07).